Here is a 194-residue protein sequence, read N- to C-terminus: Dephospho-CoA kinase (194 aa).

Residues 4-194 enclose the DPCK domain; the sequence is VIGLTGSIGM…VKEILQKLGA (191 aa). 12–17 is a binding site for ATP; sequence GMGKTT.

Belongs to the CoaE family.

The protein localises to the cytoplasm. The catalysed reaction is 3'-dephospho-CoA + ATP = ADP + CoA + H(+). Its pathway is cofactor biosynthesis; coenzyme A biosynthesis; CoA from (R)-pantothenate: step 5/5. Its function is as follows. Catalyzes the phosphorylation of the 3'-hydroxyl group of dephosphocoenzyme A to form coenzyme A. This chain is Dephospho-CoA kinase, found in Agrobacterium fabrum (strain C58 / ATCC 33970) (Agrobacterium tumefaciens (strain C58)).